A 505-amino-acid chain; its full sequence is Salutaridine synthase (505 aa).

A helical membrane pass occupies residues aspartate 10–serine 30. Cysteine 444 lines the heme pocket.

This sequence belongs to the cytochrome P450 family. Heme serves as cofactor.

It is found in the endoplasmic reticulum membrane. It catalyses the reaction (R)-reticuline + reduced [NADPH--hemoprotein reductase] + O2 = salutaridine + oxidized [NADPH--hemoprotein reductase] + 2 H2O + H(+). Cytochrome P450 monooxygenase involved in biosynthesis of morphinan-type benzylisoquinoline and opiate alkaloids natural products. Catalyzes the formation of the morphinan alkaloid salutaridine by intramolecular phenol oxidation of (R)-reticuline without the incorporation of oxygen into the product. Can also use (R)-norreticuline as substrate. This Papaver somniferum (Opium poppy) protein is Salutaridine synthase.